A 172-amino-acid chain; its full sequence is Protein-export protein SecB (172 aa).

The interval 1 to 22 (MADETSADINNPALQPNGEDTS) is disordered. Polar residues predominate over residues 7–20 (ADINNPALQPNGED).

This sequence belongs to the SecB family. In terms of assembly, homotetramer, a dimer of dimers. One homotetramer interacts with 1 SecA dimer.

It is found in the cytoplasm. Its function is as follows. One of the proteins required for the normal export of preproteins out of the cell cytoplasm. It is a molecular chaperone that binds to a subset of precursor proteins, maintaining them in a translocation-competent state. It also specifically binds to its receptor SecA. This is Protein-export protein SecB from Sphingopyxis alaskensis (strain DSM 13593 / LMG 18877 / RB2256) (Sphingomonas alaskensis).